The following is a 107-amino-acid chain: C-X-C motif chemokine 3 (107 aa).

The first 34 residues, 1 to 34 (MAHATLSAAPSNPRLLRVALLLLLLVAASRRAAG), serve as a signal peptide directing secretion. Intrachain disulfides connect Cys43-Cys69 and Cys45-Cys85.

This sequence belongs to the intercrine alpha (chemokine CxC) family. In terms of processing, N-terminal processed form GRO-gamma(5-73) is produced by proteolytic cleavage after secretion from peripheral blood monocytes.

Its subcellular location is the secreted. Its function is as follows. Ligand for CXCR2. Has chemotactic activity for neutrophils. May play a role in inflammation and exert its effects on endothelial cells in an autocrine fashion. In vitro, the processed form GRO-gamma(5-73) shows a fivefold higher chemotactic activity for neutrophilic granulocytes. The protein is C-X-C motif chemokine 3 (CXCL3) of Homo sapiens (Human).